A 348-amino-acid chain; its full sequence is Competence protein ComGA (348 aa).

G145–T152 provides a ligand contact to ATP.

It belongs to the GSP E family.

It is found in the cell membrane. Its function is as follows. Required for uptake of DNA by competent cells. The chain is Competence protein ComGA (comGA) from Halalkalibacterium halodurans (strain ATCC BAA-125 / DSM 18197 / FERM 7344 / JCM 9153 / C-125) (Bacillus halodurans).